We begin with the raw amino-acid sequence, 92 residues long: UPF0250 protein VV0902 (92 aa).

It belongs to the UPF0250 family.

The polypeptide is UPF0250 protein VV0902 (Vibrio vulnificus (strain YJ016)).